Consider the following 639-residue polypeptide: Extracellular metalloproteinase 1 (639 aa).

Positions 1–19 (MHGLLLAAGLISLPLHVLA) are cleaved as a signal peptide. Residues 20 to 250 (HPQPSSTSLA…VHNVVDYVAH (231 aa)) constitute a propeptide that is removed on maturation. Asn291 carries N-linked (GlcNAc...) asparagine glycosylation. Residue His434 participates in Zn(2+) binding. The active site involves Glu435. His438 contacts Zn(2+). An N-linked (GlcNAc...) asparagine glycan is attached at Asn598.

It belongs to the peptidase M36 family. Zn(2+) is required as a cofactor.

The protein resides in the secreted. Functionally, secreted metalloproteinase probably acting as a virulence factor. The polypeptide is Extracellular metalloproteinase 1 (MEP1) (Arthroderma otae (strain ATCC MYA-4605 / CBS 113480) (Microsporum canis)).